The primary structure comprises 376 residues: Phosphoserine aminotransferase (376 aa).

L-glutamate is bound at residue arginine 42. Residues tryptophan 104, threonine 163, aspartate 188, and glutamine 211 each coordinate pyridoxal 5'-phosphate. Residue lysine 212 is modified to N6-(pyridoxal phosphate)lysine. A pyridoxal 5'-phosphate-binding site is contributed by 253-254; sequence NT.

It belongs to the class-V pyridoxal-phosphate-dependent aminotransferase family. SerC subfamily. As to quaternary structure, homodimer. Requires pyridoxal 5'-phosphate as cofactor.

It localises to the cytoplasm. It catalyses the reaction O-phospho-L-serine + 2-oxoglutarate = 3-phosphooxypyruvate + L-glutamate. It carries out the reaction 4-(phosphooxy)-L-threonine + 2-oxoglutarate = (R)-3-hydroxy-2-oxo-4-phosphooxybutanoate + L-glutamate. It participates in amino-acid biosynthesis; L-serine biosynthesis; L-serine from 3-phospho-D-glycerate: step 2/3. It functions in the pathway cofactor biosynthesis; pyridoxine 5'-phosphate biosynthesis; pyridoxine 5'-phosphate from D-erythrose 4-phosphate: step 3/5. Catalyzes the reversible conversion of 3-phosphohydroxypyruvate to phosphoserine and of 3-hydroxy-2-oxo-4-phosphonooxybutanoate to phosphohydroxythreonine. The polypeptide is Phosphoserine aminotransferase (Bordetella avium (strain 197N)).